The primary structure comprises 119 residues: Large ribosomal subunit protein uL18 (119 aa).

Belongs to the universal ribosomal protein uL18 family. As to quaternary structure, part of the 50S ribosomal subunit; part of the 5S rRNA/L5/L18/L25 subcomplex. Contacts the 5S and 23S rRNAs.

Functionally, this is one of the proteins that bind and probably mediate the attachment of the 5S RNA into the large ribosomal subunit, where it forms part of the central protuberance. The sequence is that of Large ribosomal subunit protein uL18 from Ruegeria sp. (strain TM1040) (Silicibacter sp.).